A 192-amino-acid polypeptide reads, in one-letter code: UPF0301 protein Rru_A3059 (192 aa).

This sequence belongs to the UPF0301 (AlgH) family.

This Rhodospirillum rubrum (strain ATCC 11170 / ATH 1.1.1 / DSM 467 / LMG 4362 / NCIMB 8255 / S1) protein is UPF0301 protein Rru_A3059.